Here is a 427-residue protein sequence, read N- to C-terminus: Enolase (427 aa).

Glutamine 163 contributes to the (2R)-2-phosphoglycerate binding site. The active-site Proton donor is glutamate 205. Residues aspartate 242, glutamate 285, and aspartate 312 each contribute to the Mg(2+) site. 4 residues coordinate (2R)-2-phosphoglycerate: lysine 337, arginine 366, serine 367, and lysine 388. Lysine 337 serves as the catalytic Proton acceptor.

Belongs to the enolase family. The cofactor is Mg(2+).

Its subcellular location is the cytoplasm. The protein localises to the secreted. It localises to the cell surface. The enzyme catalyses (2R)-2-phosphoglycerate = phosphoenolpyruvate + H2O. Its pathway is carbohydrate degradation; glycolysis; pyruvate from D-glyceraldehyde 3-phosphate: step 4/5. Catalyzes the reversible conversion of 2-phosphoglycerate (2-PG) into phosphoenolpyruvate (PEP). It is essential for the degradation of carbohydrates via glycolysis. The polypeptide is Enolase (Rhodopseudomonas palustris (strain BisA53)).